The following is a 519-amino-acid chain: Laccase-2 (519 aa).

A signal peptide spans 1–20 (MGLQRFSFFVTLALVARSLA). 2 Plastocyanin-like domains span residues 22–147 (IGPV…FVVY) and 159–301 (VDNE…ILRY). An N-linked (GlcNAc...) asparagine glycan is attached at Asn-74. His-84, His-86, His-129, and His-131 together coordinate Cu cation. 2 disulfide bridges follow: Cys-105–Cys-508 and Cys-137–Cys-225. Asn-161, Asn-228, Asn-237, Asn-271, Asn-353, and Asn-361 each carry an N-linked (GlcNAc...) asparagine glycan. A Plastocyanin-like 3 domain is found at 368-490 (TVPVLLQILS…AGFAIVFAED (123 aa)). Residues His-415, His-418, and His-420 each coordinate Cu cation. The N-linked (GlcNAc...) asparagine glycan is linked to Asn-456. His-472, Cys-473, His-474, and His-478 together coordinate Cu cation.

This sequence belongs to the multicopper oxidase family. Cu cation is required as a cofactor.

It localises to the secreted. It carries out the reaction 4 hydroquinone + O2 = 4 benzosemiquinone + 2 H2O. Its function is as follows. Lignin degradation and detoxification of lignin-derived products. This is Laccase-2 (LCC2) from Trametes versicolor (White-rot fungus).